The primary structure comprises 440 residues: Chromosome partition protein MukF (440 aa).

The leucine-zipper stretch occupies residues 208-236 (LDETSGNLRELQDTLNAAGDKLQSQLLRI).

Belongs to the MukF family. In terms of assembly, interacts, and probably forms a ternary complex, with MukE and MukB via its C-terminal region. The complex formation is stimulated by calcium or magnesium. It is required for an interaction between MukE and MukB.

Its subcellular location is the cytoplasm. It localises to the nucleoid. Functionally, involved in chromosome condensation, segregation and cell cycle progression. May participate in facilitating chromosome segregation by condensation DNA from both sides of a centrally located replisome during cell division. Not required for mini-F plasmid partitioning. Probably acts via its interaction with MukB and MukE. Overexpression results in anucleate cells. It has a calcium binding activity. The polypeptide is Chromosome partition protein MukF (Histophilus somni (strain 129Pt) (Haemophilus somnus)).